The primary structure comprises 462 residues: Cytochrome P450 20A1 (462 aa).

The chain crosses the membrane as a helical span at residues 4 to 24 (FAIFAVTFLLALVGAVLYLYP). Residue Cys409 coordinates heme.

This sequence belongs to the cytochrome P450 family. Heme is required as a cofactor.

It localises to the membrane. The sequence is that of Cytochrome P450 20A1 (Cyp20a1) from Rattus norvegicus (Rat).